A 91-amino-acid polypeptide reads, in one-letter code: Small ribosomal subunit protein uS19 (91 aa).

The protein belongs to the universal ribosomal protein uS19 family.

Its function is as follows. Protein S19 forms a complex with S13 that binds strongly to the 16S ribosomal RNA. This is Small ribosomal subunit protein uS19 from Exiguobacterium sp. (strain ATCC BAA-1283 / AT1b).